A 250-amino-acid polypeptide reads, in one-letter code: Putative inner dynein arm light chain, axonemal (250 aa).

The stretch at 168–250 (MRKALQAHEE…QLEGITAPKK (83 aa)) forms a coiled coil.

The protein belongs to the inner dynein arm light chain family.

Its subcellular location is the cell projection. The protein resides in the cilium. It localises to the dynein axonemal particle. In terms of biological role, may play a dynamic role in flagellar motility. In Drosophila melanogaster (Fruit fly), this protein is Putative inner dynein arm light chain, axonemal.